Here is a 275-residue protein sequence, read N- to C-terminus: Tumor necrosis factor-inducible gene 6 protein (275 aa).

The signal sequence occupies residues 1–17 (MVVLLCLCVLLWEEAHG). The 94-residue stretch at 36–129 (GVYHREARAG…SERWDAYCYN (94 aa)) folds into the Link domain. 3 disulfides stabilise this stretch: Cys-58–Cys-127, Cys-82–Cys-103, and Cys-135–Cys-161. An N-linked (GlcNAc...) asparagine glycan is attached at Asn-118. Residues 135 to 247 (CGGVFTDPKR…GGFQIKYVTV (113 aa)) enclose the CUB domain. 5 residues coordinate Ca(2+): Glu-183, Asp-191, Asp-232, Ser-234, and Val-235. Cys-188 and Cys-210 are joined by a disulfide. A compositionally biased stretch (polar residues) spans 253 to 264 (SSQAKNTSTTGN). The interval 253–275 (SSQAKNTSTTGNKKFLPGRFSHL) is disordered. Asn-258 is a glycosylation site (N-linked (GlcNAc...) asparagine).

Interacts (via Link domain) with inter-alpha-inhibitor (I-alpha-I) component bikunin. Interacts with ITIH2/HC2; this interaction is required for transesterification of the HC to hyaluronan. Interacts (via Link and CUB domains) with ITIH1. Chondroitin sulfate may be required for the stability of the complex. Interacts (via Link domain) with various C-X-C and C-C chemokines including PF4, CXCL8, CXCL11, CXCL12, CCL2, CCL7, CCL19, CCL21, and CCL27; this interaction interferes with chemokine binding to glycosaminoglycans. Interacts (primarily via Link domain) with BMP2; this interaction is inhibited by hyaluronan. Interacts (via both Link and CUB domains) with TNFSF11. Interacts (via CUB domain) with FN1 (via type III repeats 9-14); this interaction enhances fibronectin fibril assembly. TNFAIP6 may act as a bridging molecule between FN1 and THBS1. Expressed in epiphyseal and metaphyseal bone marrow of both the femur and tibia (at protein level).

The protein resides in the secreted. Major regulator of extracellular matrix organization during tissue remodeling. Catalyzes the transfer of a heavy chain (HC) from inter-alpha-inhibitor (I-alpha-I) complex to hyaluronan. Cleaves the ester bond between the C-terminus of the HC and GalNAc residue of the chondroitin sulfate chain in I-alpha-I complex followed by transesterification of the HC to hyaluronan. In the process, potentiates the antiprotease function of I-alpha-I complex through release of free bikunin. Acts as a catalyst in the formation of hyaluronan-HC oligomers and hyaluronan-rich matrix surrounding the cumulus cell-oocyte complex, a necessary step for oocyte fertilization. Assembles hyaluronan in pericellular matrices that serve as platforms for receptor clustering and signaling. Enables binding of hyaluronan deposited on the surface of macrophages to LYVE1 on lymphatic endothelium and facilitates macrophage extravasation. Alters hyaluronan binding to functionally latent CD44 on vascular endothelium, switching CD44 into an active state that supports leukocyte rolling. Modulates the interaction of chemokines with extracellular matrix components and proteoglycans on endothelial cell surface, likely preventing chemokine gradient formation. In a negative feedback mechanism, may limit excessive neutrophil recruitment at inflammatory sites by antagonizing the association of CXCL8 with glycosaminoglycans on vascular endothelium. Has a role in osteogenesis and bone remodeling. Inhibits BMP2-dependent differentiation of mesenchymal stem cell to osteoblasts. Protects against bone erosion during inflammation by inhibiting TNFSF11/RANKL-dependent osteoclast activation. This chain is Tumor necrosis factor-inducible gene 6 protein (Tnfaip6), found in Mus musculus (Mouse).